The following is an 805-amino-acid chain: Angiotensin-converting enzyme 2 (805 aa).

Positions 1 to 17 are cleaved as a signal peptide; that stretch reads MSSSSWLLLSLVAVTAA. Over 18–740 the chain is Extracellular; the sequence is QSTIEEQAKT…LGPPNQPPVS (723 aa). The Peptidase M2 domain maps to 19–607; it reads STIEEQAKTF…QNKNSFVGWS (589 aa). The tract at residues 30–41 is interaction with SARS-CoV spike glycoprotein; sequence DKFNHEAEDLFY. N-linked (GlcNAc...) asparagine glycosylation is present at N53. Residues 82–84 form an interaction with SARS-CoV spike glycoprotein region; sequence MYP. N90 and N103 each carry an N-linked (GlcNAc...) asparagine glycan. The cysteines at positions 133 and 141 are disulfide-linked. R169 is a chloride binding site. Substrate is bound at residue R273. N322 carries an N-linked (GlcNAc...) asparagine glycan. A disulfide bridge connects residues C344 and C361. 345 to 346 contacts substrate; sequence HP. An interaction with SARS-CoV spike glycoprotein region spans residues 353 to 357; sequence KGDFR. Position 374 (H374) interacts with Zn(2+). E375 (proton acceptor) is an active-site residue. Residues H378 and E402 each contribute to the Zn(2+) site. A glycan (N-linked (GlcNAc...) asparagine) is linked at N432. Residues W477 and K481 each coordinate chloride. The Proton donor role is filled by H505. Position 515 (Y515) interacts with substrate. A disulfide bond links C530 and C542. The N-linked (GlcNAc...) asparagine glycan is linked to N546. A Collectrin-like domain is found at 614-805; that stretch reads ADQSIKVRIS…QNTDDVQTSF (192 aa). The segment at 652–659 is essential for cleavage by ADAM17; sequence RQYFLKVK. A glycan (N-linked (GlcNAc...) asparagine) is linked at N690. Residues 697–716 form an essential for cleavage by TMPRSS11D and TMPRSS2 region; it reads RTEVEKAIRMSRSRINDAFR. Residues 741-761 traverse the membrane as a helical segment; the sequence is IWLIVFGVVMGVIVVGIVILI. The Cytoplasmic portion of the chain corresponds to 762–805; sequence FTGIRDRKKKNKARSGENPYASIDISKGENNPGFQNTDDVQTSF. A disordered region spans residues 772 to 805; it reads NKARSGENPYASIDISKGENNPGFQNTDDVQTSF. The LIR motif lies at 778–786; that stretch reads ENPYASIDI. A Phosphotyrosine modification is found at Y781. The short motif at 781 to 784 is the Endocytic sorting signal element; that stretch reads YASI. The short motif at 781-785 is the SH2-binding element; the sequence is YASID. S783 carries the phosphoserine modification. K788 is covalently cross-linked (Glycyl lysine isopeptide (Lys-Gly) (interchain with G-Cter in ubiquitin)). A compositionally biased stretch (polar residues) spans 789–805; sequence GENNPGFQNTDDVQTSF. The PTB motif lies at 792–795; that stretch reads NPGF. Positions 803 to 805 match the PDZ-binding motif; the sequence is TSF.

Belongs to the peptidase M2 family. In terms of assembly, homodimer. Interacts with the catalytically active form of TMPRSS2. Interacts with SLC6A19; this interaction is essential for expression and function of SLC6A19 in intestine. Interacts with ITGA5:ITGB1. Probably interacts (via endocytic sorting signal motif) with AP2M1; the interaction is inhibited by phosphorylation of Tyr-781. Interacts (via PDZ-binding motif) with NHERF1 (via PDZ domains); the interaction may enhance ACE2 membrane residence. As to quaternary structure, (Microbial infection) Interacts with SARS coronavirus/SARS-CoV spike protein. (Microbial infection) Interacts with SARS coronavirus-2/SARS-CoV-2 spike protein (via RBD domain). In terms of assembly, (Microbial infection) Interacts with human coronavirus NL63 spike protein. As to quaternary structure, (Microbial infection) Interacts with human coronavirus NL63/HCoV-NL63 spike glycoprotein. (Microbial infection) Interacts with SARS coronavirus-2/SARS-CoV-2 spike protein; the interaction is increased by AVP/Arg-vasopressin with which they may form a complex. Requires Zn(2+) as cofactor. The cofactor is chloride. Post-translationally, N-glycosylation on Asn-90 may limit SARS infectivity. In terms of processing, proteolytic cleavage by ADAM17 generates a secreted form. Also cleaved by serine proteases: TMPRSS2, TMPRSS11D and HPN/TMPRSS1. Phosphorylated. Phosphorylation at Tyr-781 probably inhibits interaction with AP2M1 and enables interactions with proteins containing SH2 domains. Post-translationally, ubiquitinated. Ubiquitinated on Lys-788 via 'Lys-48'-linked ubiquitin. 'Lys-48'-linked deubiquitinated by USP50 on the Lys-788; leading to its stabilization. Expressed in endothelial cells from small and large arteries, and in arterial smooth muscle cells (at protein level). Expressed in enterocytes of the small intestine, Leydig cells and Sertoli cells (at protein level). Expressed in the renal proximal tubule and the small intestine (at protein level). Expressed in heart, kidney, testis, and gastrointestinal system (at protein level). In lung, expressed at low levels in some alveolar type 2 cells, the expression seems to be individual-specific (at protein level). Expressed in nasal epithelial cells (at protein level). Coexpressed with TMPRSS2 within some lung alveolar type 2 cells, ileal absorptive enterocytes, intestinal epithelial cells, cornea, gallbladder and nasal goblet secretory cells. Coexpressed with TMPRSS4 within mature enterocytes. In terms of tissue distribution, expressed in nasal and bronchial epithelial cells (at protein level).

The protein resides in the secreted. Its subcellular location is the cell membrane. It is found in the cytoplasm. The protein localises to the cell projection. It localises to the cilium. The protein resides in the apical cell membrane. The enzyme catalyses angiotensin II + H2O = angiotensin-(1-7) + L-phenylalanine. The catalysed reaction is angiotensin I + H2O = angiotensin-(1-9) + L-leucine. It carries out the reaction bradykinin(1-8) + H2O = bradykinin(1-7) + L-phenylalanine. It catalyses the reaction neurotensin + H2O = neurotensin-(1-12) + L-leucine. The enzyme catalyses neurotensin-(1-8) + H2O = neurotensin-(1-7) + L-arginine. The catalysed reaction is kinetensin + H2O = kinetensin-(1-8) + L-leucine. It carries out the reaction dynorphin A-(1-13) + H2O = dynorphin A-(1-12) + L-lysine. It catalyses the reaction apelin-13 + H2O = apelin-12 + L-phenylalanine. The enzyme catalyses [Pyr1]apelin-13 + H2O = [Pyr1]apelin-12 + L-phenylalanine. The catalysed reaction is apelin-17 + H2O = apelin-16 + L-phenylalanine. It carries out the reaction beta-casomorphin-7 + H2O = beta-casomorphin-6 + L-isoleucine. It catalyses the reaction neocasomorphin + H2O = neocasomorphin-(1-5) + L-isoleucine. Its activity is regulated as follows. Regulated by chloride and fluoride, but not bromide. Chloride increases angiotensin I and decreases angiotensin II cleavage. Inhibited by MLN-4760, cFP_Leu, and EDTA, but not by the ACE inhibitors lisinopril, captopril and enalaprilat. Highly potent and selective in vitro ACE2 inhibitors were identified. Its function is as follows. Essential counter-regulatory carboxypeptidase of the renin-angiotensin hormone system that is a critical regulator of blood volume, systemic vascular resistance, and thus cardiovascular homeostasis. Converts angiotensin I to angiotensin 1-9, a nine-amino acid peptide with anti-hypertrophic effects in cardiomyocytes, and angiotensin II to angiotensin 1-7, which then acts as a beneficial vasodilator and anti-proliferation agent, counterbalancing the actions of the vasoconstrictor angiotensin II. Also removes the C-terminal residue from three other vasoactive peptides, neurotensin, kinetensin, and des-Arg bradykinin, but is not active on bradykinin. Also cleaves other biological peptides, such as apelins (apelin-13, [Pyr1]apelin-13, apelin-17, apelin-36), casomorphins (beta-casomorphin-7, neocasomorphin) and dynorphin A with high efficiency. In addition, ACE2 C-terminus is homologous to collectrin and is responsible for the trafficking of the neutral amino acid transporter SL6A19 to the plasma membrane of gut epithelial cells via direct interaction, regulating its expression on the cell surface and its catalytic activity. Functionally, (Microbial infection) Acts as a receptor for human coronaviruses SARS-CoV and SARS-CoV-2, as well as human coronavirus NL63/HCoV-NL63. In terms of biological role, non-functional as a carboxypeptidase. (Microbial infection) Non-functional as a receptor for human coronavirus SARS-CoV-2. The polypeptide is Angiotensin-converting enzyme 2 (Homo sapiens (Human)).